The following is a 204-amino-acid chain: Protein phosphatase 1 regulatory subunit 1B (204 aa).

Position 1 is an N-acetylmethionine (Met-1). The interval 1-204 (MDPKDRKKIQ…QRPSPSEPGT (204 aa)) is disordered. Thr-34 bears the Phosphothreonine; by PKA mark. Basic and acidic residues predominate over residues 41–63 (LSEHSSPEEEASPHQRASGEGHH). A phosphoserine mark is found at Ser-45 and Ser-46. Thr-75 carries the phosphothreonine; by CDK5 modification. A compositionally biased stretch (polar residues) spans 89-100 (HLQSISNLNENQ). Ser-102 is subject to Phosphoserine. A compositionally biased stretch (basic and acidic residues) spans 109–118 (GELRELGYPR). 2 stretches are compositionally biased toward acidic residues: residues 119 to 138 (EEDE…EDSQ) and 170 to 183 (DESE…DQVE). The residue at position 137 (Ser-137) is a Phosphoserine. Phosphoserine is present on Ser-198.

This sequence belongs to the protein phosphatase inhibitor 1 family. In terms of processing, dopamine- and cyclic AMP-regulated neuronal phosphoprotein. Post-translationally, phosphorylation of Thr-34 is required for activity.

It is found in the cytoplasm. In terms of biological role, inhibitor of protein-phosphatase 1. The polypeptide is Protein phosphatase 1 regulatory subunit 1B (PPP1R1B) (Homo sapiens (Human)).